Reading from the N-terminus, the 282-residue chain is uncharacterized protein (282 aa).

A run of 5 helical transmembrane segments spans residues 9–29 (LLKIFVVGVFPCTLFVNAPHG), 43–63 (ISGRVGWVLMELVAPLTFLYA), 123–143 (VFVSAVLFNFLNGMSIGLYLV), 158–178 (YIGMFLWLMGWLGNMYHDNIL), and 232–252 (LAAGPSAEPFWWFFLSEILLM).

The protein belongs to the steroid 5-alpha reductase family.

It is found in the endoplasmic reticulum membrane. This is an uncharacterized protein from Schizosaccharomyces pombe (strain 972 / ATCC 24843) (Fission yeast).